The following is a 329-amino-acid chain: Mas-related G-protein coupled receptor member X2 (329 aa).

At 1 to 33 the chain is on the extracellular side; sequence MDPTTPAWGTESTTMDGNDQSLPLLCDKEALIP. A helical transmembrane segment spans residues 34 to 54; it reads VFLILFIALVGLVGNGFVLWL. The Cytoplasmic portion of the chain corresponds to 55–63; the sequence is LGFRMSRNA. A helical transmembrane segment spans residues 64 to 84; it reads FSVYVLSLAGADFLFLCFQII. Residues 85 to 96 are Extracellular-facing; that stretch reads NCLVYLRDFFCS. The helical transmembrane segment at 97–117 threads the bilayer; the sequence is ISINFPSXFTTVMTCAYLAGL. Residues 118-144 lie on the Cytoplasmic side of the membrane; it reads SMLSTISTERCLSVLWPIWYRCRRPRH. Residues 145-165 form a helical membrane-spanning segment; that stretch reads LSAVVCVLLWALSLLLSILEG. Residues 166–184 are Extracellular-facing; it reads KFCGFLFSDGDFGWCQIFD. Residues 185–205 form a helical membrane-spanning segment; that stretch reads FITAAWLIFLFVVLCASSLAL. Residues 206-228 lie on the Cytoplasmic side of the membrane; the sequence is LVRILCGSRGLPLTRLYLTILLT. Residues 229–249 form a helical membrane-spanning segment; that stretch reads VLVFLLCGLPFGIQWFLILGF. At 250 to 263 the chain is on the extracellular side; that stretch reads WNSDVLLCHIHLVS. Residues 264 to 284 form a helical membrane-spanning segment; the sequence is VVLSSLNSSANPIIYFFVGSF. Over 285 to 329 the chain is Cytoplasmic; sequence RKQWRLQQPILKLAFQRALQDTAEVDHSEGCFPQGTSEMSRSSLV.

The protein belongs to the G-protein coupled receptor 1 family. Mas subfamily.

Its subcellular location is the cell membrane. In terms of biological role, mast cell-specific receptor for basic secretagogues, i.e. cationic amphiphilic drugs, as well as endo- or exogenous peptides, consisting of a basic head group and a hydrophobic core. Recognizes and binds small molecules containing a cyclized tetrahydroisoquinoline (THIQ), such as non-steroidal neuromuscular blocking drugs (NMBDs), including tubocurarine and atracurium. In response to these compounds, mediates pseudo-allergic reactions characterized by histamine release, inflammation and airway contraction. This is Mas-related G-protein coupled receptor member X2 (MRGPRX2) from Hoolock hoolock (Western hoolock gibbon).